The primary structure comprises 156 residues: Gamma-L-glutamyl-butirosin B gamma-glutamyl cyclotransferase (156 aa).

Tyr-24–Leu-27 lines the substrate pocket. Glu-89 acts as the Proton acceptor in catalysis.

The protein belongs to the gamma-glutamylcyclotransferase family.

The enzyme catalyses gamma-L-glutamyl-butirosin B = butirosin B + 5-oxo-L-proline. The protein operates within antibiotic biosynthesis; butirosin biosynthesis. In terms of biological role, cyclotransferase that catalyzes the last step in the biosynthesis of the aminoglycoside antibiotic butirosin B. Cleaves the amide bond via transamidation using the alpha-amine of the terminal gamma-L-glutamate of the side chain, releasing it as the cyclic 5-oxoproline. This chain is Gamma-L-glutamyl-butirosin B gamma-glutamyl cyclotransferase (btrG), found in Niallia circulans (Bacillus circulans).